The primary structure comprises 126 residues: MAFSGTWQVYSQENIEDFLRALSLPEEVIKIGKDIKPVIDIKQTGEHFVIVVKTSQQTVTNEFTVGKEAEITSMDGKKLKCTVQLEDGKLVAKKLKFTHIQEVQGNEMIEKLTAGNATMIRKSRRM.

Alanine 2 is modified (N-acetylalanine).

It belongs to the calycin superfamily. Fatty-acid binding protein (FABP) family.

It localises to the cytoplasm. In terms of biological role, binds free fatty acids and their coenzyme A derivatives, bilirubin, and some other small molecules in the cytoplasm. May be involved in intracellular lipid transport. The sequence is that of Fatty acid-binding protein, liver (fabp1) from Schroederichthys bivius (Narrowmouthed catshark).